The chain runs to 564 residues: Cytochrome c oxidase subunit 1 (564 aa).

The disordered stretch occupies residues 1 to 23 (MTAVAPRLENYAEPTRPAPTGGA). 7 helical membrane passes run 43–63 (MMYI…ALLI), 83–103 (LFTL…VWGF), 122–142 (LNAF…AGFL), 171–191 (FWII…VNMI), 214–234 (IFVA…AALG), 259–279 (LFWF…FGIV), and 292–312 (FGYI…MAVW). Position 87 (His-87) interacts with Fe(II)-heme a. Positions 265 and 269 each coordinate Cu cation. Positions 265-269 (HPEVY) form a cross-link, 1'-histidyl-3'-tyrosine (His-Tyr). Cu cation is bound by residues His-314 and His-315. A run of 2 helical transmembrane segments spans residues 316-336 (MFVT…LISV) and 360-380 (MTWT…GIML). A heme a3-binding site is contributed by His-398. 3 helical membrane passes run 399–419 (FHYT…YFWF), 434–454 (IHFW…HWVG), and 477–497 (ISTV…WNVF). His-400 serves as a coordination point for Fe(II)-heme a.

This sequence belongs to the heme-copper respiratory oxidase family. As to quaternary structure, associates with subunits II, III and IV to form cytochrome c oxidase. It depends on Cu(2+) as a cofactor. Heme is required as a cofactor.

Its subcellular location is the cell membrane. It carries out the reaction 4 Fe(II)-[cytochrome c] + O2 + 8 H(+)(in) = 4 Fe(III)-[cytochrome c] + 2 H2O + 4 H(+)(out). It participates in energy metabolism; oxidative phosphorylation. Cytochrome c oxidase is the component of the respiratory chain that catalyzes the reduction of oxygen to water. Subunits 1-3 form the functional core of the enzyme complex. CO I is the catalytic subunit of the enzyme. Electrons originating in cytochrome c are transferred via the copper A center of subunit 2 and heme A of subunit 1 to the bimetallic center formed by heme A3 and copper B. The polypeptide is Cytochrome c oxidase subunit 1 (ctaD) (Corynebacterium diphtheriae (strain ATCC 700971 / NCTC 13129 / Biotype gravis)).